The following is a 191-amino-acid chain: Vascular endothelial growth factor A (191 aa).

The signal sequence occupies residues 1–26; it reads MNFLLTWIHWGLAALLYFHNAKVLQA. Cystine bridges form between C52/C94, C83/C128, and C87/C130. Residue N101 is glycosylated (N-linked (GlcNAc...) asparagine).

It belongs to the PDGF/VEGF growth factor family. As to quaternary structure, homodimer; disulfide-linked. Also found as heterodimer with PGF. In terms of tissue distribution, expressed by the venom gland, and probably other tissues.

It localises to the secreted. Growth factor active in angiogenesis, vasculogenesis and endothelial cell growth. Induces endothelial cell proliferation, promotes cell migration, inhibits apoptosis and induces permeabilization of blood vessels. Binds to heparan sulfate and heparin. This is Vascular endothelial growth factor A from Bitis gabonica (Gaboon adder).